Consider the following 45-residue polypeptide: Sperm-specific protein Phi-3 (45 aa).

Residues 1 to 45 (AKAKRSPRKKKAAVKKSSKSKAKKPKSPKKKKAAKKPAKKAAKKK) are disordered.

It localises to the nucleus. Its subcellular location is the chromosome. Its function is as follows. Involved in nuclear basic protein transition: histones are replaced by spermatid specific proteins which are themselves replaced by protamines in late spermatids. The chain is Sperm-specific protein Phi-3 from Mytilus californianus (California mussel).